Consider the following 99-residue polypeptide: uncharacterized protein (99 aa).

This is an uncharacterized protein from Micromonospora olivasterospora.